Consider the following 182-residue polypeptide: NADH-quinone oxidoreductase subunit I (182 aa).

4Fe-4S ferredoxin-type domains lie at 52–82 and 92–121; these read LTRD…LQKA and DFFR…LTPD. Residues C62, C65, C68, C72, C101, C104, C107, and C111 each contribute to the [4Fe-4S] cluster site.

This sequence belongs to the complex I 23 kDa subunit family. NDH-1 is composed of 13 different subunits. Subunits NuoA, H, J, K, L, M, N constitute the membrane sector of the complex. Requires [4Fe-4S] cluster as cofactor.

Its subcellular location is the cell inner membrane. It catalyses the reaction a quinone + NADH + 5 H(+)(in) = a quinol + NAD(+) + 4 H(+)(out). Functionally, NDH-1 shuttles electrons from NADH, via FMN and iron-sulfur (Fe-S) centers, to quinones in the respiratory chain. The immediate electron acceptor for the enzyme in this species is believed to be ubiquinone. Couples the redox reaction to proton translocation (for every two electrons transferred, four hydrogen ions are translocated across the cytoplasmic membrane), and thus conserves the redox energy in a proton gradient. Required for plants roots colonization. The sequence is that of NADH-quinone oxidoreductase subunit I (nuoI) from Pseudomonas fluorescens.